The following is a 132-amino-acid chain: Small ribosomal subunit protein uS8 (132 aa).

It belongs to the universal ribosomal protein uS8 family. In terms of assembly, part of the 30S ribosomal subunit. Contacts proteins S5 and S12.

Functionally, one of the primary rRNA binding proteins, it binds directly to 16S rRNA central domain where it helps coordinate assembly of the platform of the 30S subunit. This is Small ribosomal subunit protein uS8 from Caulobacter sp. (strain K31).